We begin with the raw amino-acid sequence, 613 residues long: Carotenoid dioxygenase (613 aa).

The interval 1–25 is disordered; that stretch reads MSPHEVIGTVPKNSTTFRTQADEHD. Fe(2+) is bound by residues His261, His313, His383, and His595.

Belongs to the carotenoid oxygenase family. The cofactor is Fe(2+).

Its subcellular location is the cytoplasm. It is found in the cytosol. The catalysed reaction is torulene + O2 = 4'-apo-beta-carotenal + 3-methyl-2-butenal. It functions in the pathway carotenoid biosynthesis. Torulene dioxygenase; part of pathway that mediates the biosynthesis of neurosporaxanthin, a carboxylic apocarotenoid acting as an essential protective pigments and leading to orange pigmentation. Cao-2 mediates the cleavage of torulene into beta-apo-4'-carotenal, the aldehyde corresponding to the acidic neurosporaxanthin. Is not able to use gamma-carotene (that it is not desaturated at the C4'-C5' bond) as substrate, which suggests a high specificity of cao-2 in cleaving the C4'-C5' double bond. Neurosporaxanthin is synthesized from geranyl-geranyl pyrophosphate (GGPP) through several enzymatic activities. Phytoene synthase activity performed by the bifunctional enzyme al-2 first produces phytoene from geranyl-geranyl pyrophosphate (GGPP). The phytoene dehydrogenase al-1 then introduces 5 desaturations to lead to 3,4-didehydrolycopene via the intermediates phytofluene, zeta-carotene, neurosporene and lycopene. Al-2 cyclase activity then converts 3,4-didehydrolycopene into torulene. Al-2 can also convet lycopene into gamma-carotene which in turn is converted to beta-carotene by an additional al-2 cyclization reaction. Torulene is the substrate of the dioxidase cao-2 that breaks the molecule, removing five carbon atoms to yield beta-apo-4'-carotenal, whereas the aldehyde dehydrogenase ylo-1 mediates the last step by converting beta-apo-4'-carotenal into neurosporaxanthin. The polypeptide is Carotenoid dioxygenase (Neurospora crassa (strain ATCC 24698 / 74-OR23-1A / CBS 708.71 / DSM 1257 / FGSC 987)).